The following is a 1024-amino-acid chain: Beta-galactosidase (1024 aa).

Positions 103 and 202 each coordinate substrate. Position 202 (Asp-202) interacts with Na(+). Mg(2+) contacts are provided by Glu-417, His-419, and Glu-462. Residues Glu-462 and 538 to 541 contribute to the substrate site; that span reads EYAH. Glu-462 functions as the Proton donor in the catalytic mechanism. Glu-538 serves as the catalytic Nucleophile. Asn-598 contributes to the Mg(2+) binding site. Na(+)-binding residues include Phe-602 and Asn-605. Positions 605 and 1000 each coordinate substrate.

It belongs to the glycosyl hydrolase 2 family. Homotetramer. The cofactor is Mg(2+). Requires Na(+) as cofactor.

The catalysed reaction is Hydrolysis of terminal non-reducing beta-D-galactose residues in beta-D-galactosides.. The polypeptide is Beta-galactosidase (Escherichia coli O17:K52:H18 (strain UMN026 / ExPEC)).